Reading from the N-terminus, the 249-residue chain is DNA polymerase sliding clamp (249 aa).

The protein belongs to the PCNA family. Homotrimer. The subunits circularize to form a toroid; DNA passes through its center. Replication factor C (RFC) is required to load the toroid on the DNA.

In terms of biological role, sliding clamp subunit that acts as a moving platform for DNA processing. Responsible for tethering the catalytic subunit of DNA polymerase and other proteins to DNA during high-speed replication. The sequence is that of DNA polymerase sliding clamp from Thermococcus onnurineus (strain NA1).